A 145-amino-acid polypeptide reads, in one-letter code: Polytheonamide B (145 aa).

Positions 1 to 96 (MADSDNTPTS…DDDLDQAAGG (96 aa)) are excised as a propeptide. T97 is modified (2-oxo-5,5-dimethylhexanoate). Position 99 is a 3-methylisoleucine (I99). Residue V101 is modified to 3-methylvaline. V102 carries the post-translational modification 3-methyl-D-valine. V103 carries the post-translational modification 3-methylvaline. Residue A104 is modified to D-alanine (Ala). 3-methylvaline is present on V105. 2 positions are modified to 3-methyl-D-valine: V106 and V110. N112 is subject to N4-methyl-D-asparagine. T113 is modified (3-hydroxyvaline (Thr)). V117 is subject to 3-methylvaline. N118 bears the N4-methyl-D-asparagine mark. Q119 carries the (3S)-3-methylglutamine modification. V120 carries the post-translational modification 3-hydroxy-D-valine. An N4-methyl-D-asparagine modification is found at N124. A (3R)-N4-methyl-3-hydroxy-D-asparagine modification is found at N126. V127 is subject to 3-methylvaline. V128 carries the post-translational modification 3-hydroxy-D-valine. Residues N130 and N132 each carry the N4-methyl-D-asparagine modification. N134 is subject to (3R)-N4-methyl-3-hydroxy-D-asparagine. N136 bears the N4-methyl-D-asparagine mark. S138 is subject to D-serine (Ser). A D-asparagine modification is found at N140. M141 is subject to 3,3-dimethylmethionine. The residue at position 142 (N142) is a D-asparagine. A D-threonine modification is found at T144.

Epimerization of most, and perhaps all, L- to D-amino acids is catalyzed by PoyD, when PoyA and PoyD are coexpressed in E.coli. In terms of processing, N-methylations are catalyzed by PoyE, when PoyA and PoyE are coexpressed in E.coli. Post-translationally, to obtain 2-oxo-5,5-dimethylhexanoate, Thr-97 is firstly dehydrated by PoyF. The second step possibly corresponds to methylation by PoyB/C, and the third step may be a cleavage by PoyH/J.

Its function is as follows. Antimicrobial peptide active against Gram-positive bacteria (MIC=4-&gt;125 ug/ml). May act by forming transmembrane ion channels, since the peptide rapidly depolarizes the bacterial cytoplasmic membrane, simultaneously decreasing the membrane potential and intracellular potassium contents. This is Polytheonamide B from Bacterium symbiont subsp. Theonella swinhoei (strain pTSMAC1).